A 632-amino-acid chain; its full sequence is 1-deoxy-D-xylulose-5-phosphate synthase (632 aa).

Residues His78 and 119–121 (AHS) each bind thiamine diphosphate. Residue Asp150 coordinates Mg(2+). Thiamine diphosphate-binding positions include 151 to 152 (GA), Asn179, Tyr286, and Glu368. Asn179 lines the Mg(2+) pocket.

The protein belongs to the transketolase family. DXPS subfamily. As to quaternary structure, homodimer. Mg(2+) is required as a cofactor. Thiamine diphosphate serves as cofactor.

The enzyme catalyses D-glyceraldehyde 3-phosphate + pyruvate + H(+) = 1-deoxy-D-xylulose 5-phosphate + CO2. Its pathway is metabolic intermediate biosynthesis; 1-deoxy-D-xylulose 5-phosphate biosynthesis; 1-deoxy-D-xylulose 5-phosphate from D-glyceraldehyde 3-phosphate and pyruvate: step 1/1. In terms of biological role, catalyzes the acyloin condensation reaction between C atoms 2 and 3 of pyruvate and glyceraldehyde 3-phosphate to yield 1-deoxy-D-xylulose-5-phosphate (DXP). This chain is 1-deoxy-D-xylulose-5-phosphate synthase, found in Albidiferax ferrireducens (strain ATCC BAA-621 / DSM 15236 / T118) (Rhodoferax ferrireducens).